We begin with the raw amino-acid sequence, 302 residues long: Elongation factor Ts (302 aa).

An involved in Mg(2+) ion dislocation from EF-Tu region spans residues 80-83 (TDFV).

The protein belongs to the EF-Ts family.

It localises to the cytoplasm. Its function is as follows. Associates with the EF-Tu.GDP complex and induces the exchange of GDP to GTP. It remains bound to the aminoacyl-tRNA.EF-Tu.GTP complex up to the GTP hydrolysis stage on the ribosome. This Methylibium petroleiphilum (strain ATCC BAA-1232 / LMG 22953 / PM1) protein is Elongation factor Ts.